A 130-amino-acid polypeptide reads, in one-letter code: Small ribosomal subunit protein uS11c (130 aa).

Belongs to the universal ribosomal protein uS11 family. As to quaternary structure, part of the 30S ribosomal subunit.

Its subcellular location is the plastid. The protein localises to the chloroplast. This chain is Small ribosomal subunit protein uS11c, found in Chlorella vulgaris (Green alga).